The following is a 274-amino-acid chain: Putative pyruvate, phosphate dikinase regulatory protein (274 aa).

An ADP-binding site is contributed by 153 to 160 (GISRTSKT).

The protein belongs to the pyruvate, phosphate/water dikinase regulatory protein family. PDRP subfamily.

It catalyses the reaction N(tele)-phospho-L-histidyl/L-threonyl-[pyruvate, phosphate dikinase] + ADP = N(tele)-phospho-L-histidyl/O-phospho-L-threonyl-[pyruvate, phosphate dikinase] + AMP + H(+). The enzyme catalyses N(tele)-phospho-L-histidyl/O-phospho-L-threonyl-[pyruvate, phosphate dikinase] + phosphate + H(+) = N(tele)-phospho-L-histidyl/L-threonyl-[pyruvate, phosphate dikinase] + diphosphate. In terms of biological role, bifunctional serine/threonine kinase and phosphorylase involved in the regulation of the pyruvate, phosphate dikinase (PPDK) by catalyzing its phosphorylation/dephosphorylation. The sequence is that of Putative pyruvate, phosphate dikinase regulatory protein from Bartonella tribocorum (strain CIP 105476 / IBS 506).